The sequence spans 562 residues: Non-homologous end joining factor IFFO1 (562 aa).

Residues 65–116 (ALRNDLGSNINVLKTLNLRFRCFLAKVHELERRNRLLEKQLQQALEEGKQGR) form an LMNA binding region. The IF rod domain maps to 73 to 529 (NINVLKTLNL…RLITQSGDRK (457 aa)). The stretch at 85–117 (RCFLAKVHELERRNRLLEKQLQQALEEGKQGRR) forms a coiled coil. A disordered region spans residues 154–187 (RVLGSPSRSPAGPLASSAACHTSSSTSTSTAFSS). Low complexity predominate over residues 168 to 187 (ASSAACHTSSSTSTSTAFSS). The stretch at 237–301 (EIRALYNVLA…MKVEQLKAEL (65 aa)) forms a coiled coil. Residues 364 to 401 (MGGRKRERKAAVEEDTSLSESDGPRQPEGAEEESTALS) are disordered. The XCCR4 binding. Required for localization to the double-strand breaks (DSBs) stretch occupies residues 453–528 (EQEDSLEKVI…RRLITQSGDR (76 aa)). Residues 458–504 (LEKVIKDTESLFKTREKEYQETIDQIELELATAKNDMNRHLHEYMEM) are a coiled coil. A disordered region spans residues 523 to 562 (TQSGDRKSPAFTAVPLSDPPPPPSETEDSDRDVSSDSSMR). Positions 553–562 (RDVSSDSSMR) are enriched in basic and acidic residues.

This sequence belongs to the intermediate filament family. As to quaternary structure, forms a heterotetramer with XRCC4. The interaction with XRCC4 is direct, involves LIG4-free XRCC4 and leads to relocalization of IFFO1 at the double-strand break (DSB) sites. Interacts with LMNA; the interaction forms an interior nucleoskeleton and the recruitment to DNA double-strand breaks.

Its subcellular location is the nucleus. It is found in the nucleoplasm. The protein resides in the nucleus inner membrane. The protein localises to the nucleus matrix. Functionally, nuclear matrix protein involved in the immobilization of broken DNA ends and the suppression of chromosome translocation during DNA double-strand breaks (DSBs). Interacts with the nuclear lamina component LMNA, resulting in the formation of a nucleoskeleton that will relocalize to the DSB sites in a XRCC4-dependent manner and promote the immobilization of the broken ends, thereby preventing chromosome translocation. Acts as a scaffold that allows the DNA repair protein XRCC4 and LMNA to assemble into a complex at the DSB sites. The polypeptide is Non-homologous end joining factor IFFO1 (Mus musculus (Mouse)).